We begin with the raw amino-acid sequence, 569 residues long: uncharacterized protein (569 aa).

Positions 1 to 22 (MSLLVKAALILKCASMLQGVSA) are cleaved as a signal peptide. The segment at 498 to 541 (RETSILDSTNTTSTNATNTTTTTSSSSTASSSASASSSTSATSG) is disordered. A compositionally biased stretch (low complexity) spans 505–540 (STNTTSTNATNTTTTTSSSSTASSSASASSSTSATS).

The protein resides in the secreted. Its subcellular location is the cell surface. This is an uncharacterized protein from Schizosaccharomyces pombe (strain 972 / ATCC 24843) (Fission yeast).